A 160-amino-acid polypeptide reads, in one-letter code: Cytochrome b6-f complex subunit 4 (160 aa).

3 helical membrane-spanning segments follow: residues 36-56, 95-115, and 131-151; these read LLYI…GLAV, LLGV…PFLE, and TVFL…ALPI.

The protein belongs to the cytochrome b family. PetD subfamily. The 4 large subunits of the cytochrome b6-f complex are cytochrome b6, subunit IV (17 kDa polypeptide, petD), cytochrome f and the Rieske protein, while the 4 small subunits are petG, petL, petM and petN. The complex functions as a dimer.

Its subcellular location is the plastid. It localises to the chloroplast thylakoid membrane. Functionally, component of the cytochrome b6-f complex, which mediates electron transfer between photosystem II (PSII) and photosystem I (PSI), cyclic electron flow around PSI, and state transitions. The polypeptide is Cytochrome b6-f complex subunit 4 (Chara vulgaris (Common stonewort)).